The following is a 161-amino-acid chain: Probable cell wall elongation regulator TseB (161 aa).

At 1–5 the chain is on the cytoplasmic side; that stretch reads MRKKA. A helical transmembrane segment spans residues 6 to 26; that stretch reads LIFTVIFGIIFLAVLLVSASI. The Extracellular portion of the chain corresponds to 27 to 161; the sequence is YKSAMAQKEE…TGKILKNITP (135 aa).

In terms of assembly, interacts with the penicillin-binding protein PBP2A, a monofunctional transpeptidase.

It is found in the cell membrane. Functionally, required for normal cell shape. Plays an important role in cell wall elongation during exponential phase and spore outgrowth. Probably regulates the activity of the penicillin-binding protein PBP2A through a direct interaction. Not required for PBP2A activity, stability and localization. The protein is Probable cell wall elongation regulator TseB of Bacillus subtilis (strain 168).